A 173-amino-acid chain; its full sequence is Archaemetzincin (173 aa).

His-130 contacts Zn(2+). The active-site Proton acceptor is Glu-131. Zn(2+)-binding residues include His-134, His-140, Cys-141, Cys-146, Cys-165, and Cys-168.

Belongs to the peptidase M54 family. As to quaternary structure, monomer. It depends on Zn(2+) as a cofactor.

Its function is as follows. Probable zinc metalloprotease whose natural substrate is unknown. This Haloarcula marismortui (strain ATCC 43049 / DSM 3752 / JCM 8966 / VKM B-1809) (Halobacterium marismortui) protein is Archaemetzincin.